The following is a 496-amino-acid chain: Protein nucleotidyltransferase YdiU (496 aa).

Residues G98, G100, R101, K116, D128, G129, R179, and R186 each coordinate ATP. D259 serves as the catalytic Proton acceptor. Mg(2+) contacts are provided by N260 and D269. D269 contributes to the ATP binding site.

Belongs to the SELO family. It depends on Mg(2+) as a cofactor. Mn(2+) serves as cofactor.

The enzyme catalyses L-seryl-[protein] + ATP = 3-O-(5'-adenylyl)-L-seryl-[protein] + diphosphate. It catalyses the reaction L-threonyl-[protein] + ATP = 3-O-(5'-adenylyl)-L-threonyl-[protein] + diphosphate. The catalysed reaction is L-tyrosyl-[protein] + ATP = O-(5'-adenylyl)-L-tyrosyl-[protein] + diphosphate. It carries out the reaction L-histidyl-[protein] + UTP = N(tele)-(5'-uridylyl)-L-histidyl-[protein] + diphosphate. The enzyme catalyses L-seryl-[protein] + UTP = O-(5'-uridylyl)-L-seryl-[protein] + diphosphate. It catalyses the reaction L-tyrosyl-[protein] + UTP = O-(5'-uridylyl)-L-tyrosyl-[protein] + diphosphate. Nucleotidyltransferase involved in the post-translational modification of proteins. It can catalyze the addition of adenosine monophosphate (AMP) or uridine monophosphate (UMP) to a protein, resulting in modifications known as AMPylation and UMPylation. The polypeptide is Protein nucleotidyltransferase YdiU (Albidiferax ferrireducens (strain ATCC BAA-621 / DSM 15236 / T118) (Rhodoferax ferrireducens)).